The primary structure comprises 106 residues: Urease subunit beta (106 aa).

Belongs to the urease beta subunit family. As to quaternary structure, heterotrimer of UreA (gamma), UreB (beta) and UreC (alpha) subunits. Three heterotrimers associate to form the active enzyme.

The protein localises to the cytoplasm. It carries out the reaction urea + 2 H2O + H(+) = hydrogencarbonate + 2 NH4(+). It participates in nitrogen metabolism; urea degradation; CO(2) and NH(3) from urea (urease route): step 1/1. In Prochlorococcus marinus (strain MIT 9215), this protein is Urease subunit beta.